Reading from the N-terminus, the 229-residue chain is Cytidylate kinase (229 aa).

12–20 (GPSGSGKGT) contributes to the ATP binding site.

The protein belongs to the cytidylate kinase family. Type 1 subfamily.

Its subcellular location is the cytoplasm. It catalyses the reaction CMP + ATP = CDP + ADP. The enzyme catalyses dCMP + ATP = dCDP + ADP. This chain is Cytidylate kinase, found in Stutzerimonas stutzeri (strain A1501) (Pseudomonas stutzeri).